The chain runs to 274 residues: S-adenosylmethionine-dependent nucleotide dehydratase (274 aa).

The Radical SAM core domain occupies 1-215 (MAYKVNLHIT…VERHAEVSHD (215 aa)). Cysteine 13, cysteine 17, and cysteine 20 together coordinate [4Fe-4S] cluster.

It belongs to the radical SAM superfamily. Prokaryotic viperin family. It depends on [4Fe-4S] cluster as a cofactor.

The enzyme catalyses CTP + AH2 + S-adenosyl-L-methionine = 3'-deoxy-3',4'-didehydro-CTP + 5'-deoxyadenosine + L-methionine + A + H2O + H(+). Expression of pVip6 in E.coli (strain MG1655) confers resistance to phages lambda, P1, SECphi6, SECphi8 and T7. Catalyzes the conversion of cytidine triphosphate (CTP) to 3'-deoxy-3',4'-didehydro-CTP (ddhCTP), probably via a SAM-dependent radical mechanism. The modified nucleotide represses transcription from T7 RNA polymerase-directed genes (possibly by acting as chain terminators), strongly suggesting these nucleotides block viral polymerase transcription. This chain is S-adenosylmethionine-dependent nucleotide dehydratase, found in Selenomonas ruminantium.